The sequence spans 166 residues: Cytochrome c-type biogenesis protein CcmE (166 aa).

The Cytoplasmic portion of the chain corresponds to 1–8; sequence MNAVRRKK. A helical; Signal-anchor for type II membrane protein transmembrane segment spans residues 9 to 29; that stretch reads LMWVMFTLAGAVIAVALVIYA. Residues 30 to 166 are Periplasmic-facing; sequence IGKQTDYYFD…KLHETKTLQQ (137 aa). The heme site is built by His-124 and Tyr-128. Residues 133–166 are disordered; that stretch reads VAKSMKENNRSGAVPSSEQYNPAEKLHETKTLQQ. The segment covering 142–152 has biased composition (polar residues); it reads RSGAVPSSEQY. A compositionally biased stretch (basic and acidic residues) spans 156–166; the sequence is EKLHETKTLQQ.

It belongs to the CcmE/CycJ family.

Its subcellular location is the cell inner membrane. Functionally, heme chaperone required for the biogenesis of c-type cytochromes. Transiently binds heme delivered by CcmC and transfers the heme to apo-cytochromes in a process facilitated by CcmF and CcmH. This chain is Cytochrome c-type biogenesis protein CcmE, found in Psychrobacter arcticus (strain DSM 17307 / VKM B-2377 / 273-4).